Consider the following 277-residue polypeptide: Large ribosomal subunit protein uL2 (277 aa).

Disordered stretches follow at residues 1–23 (MAIK…DFAE), 36–58 (PLHK…GGGH), and 219–277 (TVRG…RKNK). The span at 8 to 20 (PTSNGRRGMTSSD) shows a compositional bias: polar residues. The span at 258–277 (KTRKKKNKSDKFIVRRRKNK) shows a compositional bias: basic residues.

This sequence belongs to the universal ribosomal protein uL2 family. Part of the 50S ribosomal subunit. Forms a bridge to the 30S subunit in the 70S ribosome.

Functionally, one of the primary rRNA binding proteins. Required for association of the 30S and 50S subunits to form the 70S ribosome, for tRNA binding and peptide bond formation. It has been suggested to have peptidyltransferase activity; this is somewhat controversial. Makes several contacts with the 16S rRNA in the 70S ribosome. This Bacillus licheniformis (strain ATCC 14580 / DSM 13 / JCM 2505 / CCUG 7422 / NBRC 12200 / NCIMB 9375 / NCTC 10341 / NRRL NRS-1264 / Gibson 46) protein is Large ribosomal subunit protein uL2.